The primary structure comprises 367 residues: Probable peptidoglycan glycosyltransferase FtsW (367 aa).

The next 9 membrane-spanning stretches (helical) occupy residues 32 to 52 (LIFILIGLFAMAFTFLMPMKF), 57 to 77 (AFWGYCICFLLLALVLVPGIG), 87 to 107 (IPIGPFNFQPSEFAKLTMIVF), 119 to 139 (IHGLKGFLPIIIYLGIICFLL), 149 to 169 (MVVVAIVMSILLLGGLGFALF), 171 to 191 (LLFLSAVLLVIAAILTAPWRM), 251 to 271 (VVGEELGFVGIFFVILLFVLL), 296 to 316 (GVVVWFGVQAIVNLGVCFGVF), and 323 to 343 (LPFISYGGSSIVISLMAFGLL).

Belongs to the SEDS family. FtsW subfamily.

The protein localises to the cell inner membrane. It carries out the reaction [GlcNAc-(1-&gt;4)-Mur2Ac(oyl-L-Ala-gamma-D-Glu-L-Lys-D-Ala-D-Ala)](n)-di-trans,octa-cis-undecaprenyl diphosphate + beta-D-GlcNAc-(1-&gt;4)-Mur2Ac(oyl-L-Ala-gamma-D-Glu-L-Lys-D-Ala-D-Ala)-di-trans,octa-cis-undecaprenyl diphosphate = [GlcNAc-(1-&gt;4)-Mur2Ac(oyl-L-Ala-gamma-D-Glu-L-Lys-D-Ala-D-Ala)](n+1)-di-trans,octa-cis-undecaprenyl diphosphate + di-trans,octa-cis-undecaprenyl diphosphate + H(+). It functions in the pathway cell wall biogenesis; peptidoglycan biosynthesis. Its function is as follows. Peptidoglycan polymerase that is essential for cell division. In Taylorella equigenitalis (strain MCE9), this protein is Probable peptidoglycan glycosyltransferase FtsW.